The following is a 215-amino-acid chain: Cytochrome b6 (215 aa).

The helical transmembrane segment at 32 to 52 (IFYCLGGITLVCFLIQFATGF) threads the bilayer. Position 35 (Cys-35) interacts with heme c. Residues His-86 and His-100 each coordinate heme b. The next 3 membrane-spanning stretches (helical) occupy residues 90 to 110 (ASMM…TGGF), 116 to 136 (LTWV…VTGY), and 186 to 206 (AHTF…FLMI). Heme b is bound by residues His-187 and His-202.

It belongs to the cytochrome b family. PetB subfamily. The 4 large subunits of the cytochrome b6-f complex are cytochrome b6, subunit IV (17 kDa polypeptide, PetD), cytochrome f and the Rieske protein, while the 4 small subunits are PetG, PetL, PetM and PetN. The complex functions as a dimer. Requires heme b as cofactor. Heme c serves as cofactor.

It localises to the cellular thylakoid membrane. In terms of biological role, component of the cytochrome b6-f complex, which mediates electron transfer between photosystem II (PSII) and photosystem I (PSI), cyclic electron flow around PSI, and state transitions. In Nostoc punctiforme (strain ATCC 29133 / PCC 73102), this protein is Cytochrome b6.